A 584-amino-acid chain; its full sequence is Protein disulfide-isomerase-like protein of the testis (584 aa).

Residues 1–20 form the signal peptide; that stretch reads MDLLWMPLLLVAACVSAVHS. N-linked (GlcNAc...) asparagine glycosylation is found at Asn-58, Asn-128, Asn-160, and Asn-340. Residues 388–451 form the Thioredoxin domain; the sequence is LVKQLVGKNF…IAKIDVTAND (64 aa). N-linked (GlcNAc...) asparagine glycosylation occurs at Asn-540. The short motif at 581-584 is the Prevents secretion from ER element; it reads KEEL.

This sequence belongs to the protein disulfide isomerase family. As to quaternary structure, homodimer. The homodimer is not disulfide-linked. Interacts with ERO1A and CLGN. In terms of processing, N-glycosylated. In terms of tissue distribution, testis-specific.

Its subcellular location is the endoplasmic reticulum. Probable redox-inactive chaperone involved in spermatogenesis. The polypeptide is Protein disulfide-isomerase-like protein of the testis (PDILT) (Homo sapiens (Human)).